Reading from the N-terminus, the 72-residue chain is Light-harvesting polypeptide B-885 alpha-1 chain (72 aa).

The Cytoplasmic portion of the chain corresponds to 1-16 (SAPAQWKLWLVMDPRT). A helical membrane pass occupies residues 17–37 (VMIGTAAWLGVLALLIHFLLL). His33 is an a bacteriochlorophyll binding site. Over 38–72 (GTERFNWIDTGLKEQKATAAAQAAITPAPVTAAAK) the chain is Periplasmic.

The protein belongs to the antenna complex alpha subunit family. As to quaternary structure, the core complex is formed by different alpha and beta chains, binding bacteriochlorophyll molecules, and arranged most probably in tetrameric structures disposed around the reaction center. The non-pigmented gamma chains may constitute additional components.

The protein resides in the cell inner membrane. Antenna complexes are light-harvesting systems, which transfer the excitation energy to the reaction centers. This is Light-harvesting polypeptide B-885 alpha-1 chain from Rhodocyclus tenuis (Rhodospirillum tenue).